We begin with the raw amino-acid sequence, 366 residues long: ACP-SH:acetate ligase (366 aa).

Its subcellular location is the cytoplasm. The enzyme catalyses holo-[ACP] + acetate + ATP = acetyl-[ACP] + AMP + diphosphate. Its function is as follows. Acyl-carrier protein (ACP) acetate ligase of the biotin-dependent malonate decarboxylase multienzyme complex (EC 7.2.4.4). Involved in the conversion of the thiol group of the ACP-bound 2'-(5-phosphoribosyl)-3'-dephospho-CoA prosthetic group into its acetyl thioester using the energy from the hydrolysis of ATP. The protein is ACP-SH:acetate ligase (madH) of Malonomonas rubra.